Here is a 72-residue protein sequence, read N- to C-terminus: MEIGIVKWFNNAKGFGFISAEGVDADIFAHYSVIEMDGYRSLKAGQKVQFEVLHSDKGSHATKIIPIADTQE.

In terms of domain architecture, CSD spans 4 to 64 (GIVKWFNNAK…SDKGSHATKI (61 aa)).

The protein localises to the cytoplasm. This chain is Cold shock-like protein CspD (cspD), found in Haemophilus influenzae (strain ATCC 51907 / DSM 11121 / KW20 / Rd).